The chain runs to 842 residues: Leucine--tRNA ligase (842 aa).

The short motif at 62–72 (PYPSGDLHMGH) is the 'HIGH' region element. The interval 390 to 414 (GDEDPAETGVATAGEGTLKNSGELD) is disordered. The 'KMSKS' region motif lies at 607 to 611 (AMSKS). Residue Lys-610 participates in ATP binding.

It belongs to the class-I aminoacyl-tRNA synthetase family.

The protein localises to the cytoplasm. It carries out the reaction tRNA(Leu) + L-leucine + ATP = L-leucyl-tRNA(Leu) + AMP + diphosphate. The sequence is that of Leucine--tRNA ligase from Paenarthrobacter aurescens (strain TC1).